The chain runs to 371 residues: Meiotic drive suppressor wtf18 (371 aa).

A run of 8 helical transmembrane segments spans residues 86-106 (FLLR…TAWV), 120-140 (AFSV…FCFF), 153-173 (VTVI…AQCV), 197-217 (DLVV…FGCV), 233-253 (CSIS…IWTL), 257-277 (LFGL…TKGL), 287-307 (ATGY…LFFY), and 321-341 (FIGN…GGIG).

It belongs to the WTF family. As to quaternary structure, homomer. Interacts with other proteins that exhibit high sequence similarity.

Its subcellular location is the spore membrane. It is found in the vacuole membrane. Its function is as follows. Acts as a suppressor component of the dual wtf meiotic drive system, and can suppress but not confer meiotic drive by compatible poisons. Wtf meiotic drive systems promote unequal transmission of alleles from the parental zygote to progeny spores by encoding a poison and an antidote from the same locus; the poison is trans-acting and forms toxic aggregates in all spores within an ascus, wherease the antidote is spore-specific and targets aggregates for degradation by the vacuole. Meiotic drive by wtf systems therefore lead to poisoning of all progeny that do not inherit the dual poison/antidote allele, or express a compatible antidote. This chain is Meiotic drive suppressor wtf18, found in Schizosaccharomyces kambucha (Fission yeast).